Here is a 332-residue protein sequence, read N- to C-terminus: D-galactose/methyl-galactoside binding periplasmic protein MglB (332 aa).

The signal sequence occupies residues 1-23 (MNKKVLTLSAVMASLLFGAHAHA). Residues Asp37 and Asn114 each coordinate beta-D-galactose. Positions 37 and 114 each coordinate beta-D-glucose. Ca(2+)-binding residues include Asp157, Asn159, Asp161, Lys163, and Gln165. The beta-D-galactose site is built by His175, Asp177, and Arg181. Positions 175, 177, and 181 each coordinate beta-D-glucose. Glu228 contacts Ca(2+). Beta-D-galactose contacts are provided by Asn234, Asp259, and Asn279. Residues Asn234, Asp259, and Asn279 each coordinate beta-D-glucose.

The protein belongs to the bacterial solute-binding protein 2 family. In terms of assembly, the ABC transporter complex is composed of one ATP-binding protein (MglA), two transmembrane proteins (MglC) and a solute-binding protein (MglB).

It is found in the periplasm. Functionally, part of the ABC transporter complex MglABC involved in galactose/methyl galactoside import. In addition, binds D-galactose and D-glucose and plays a role in the chemotaxis towards these two sugars by interacting with the Trg chemoreceptor. This is D-galactose/methyl-galactoside binding periplasmic protein MglB (mglB) from Salmonella typhimurium (strain LT2 / SGSC1412 / ATCC 700720).